The primary structure comprises 286 residues: Energy-coupling factor transporter ATP-binding protein EcfA2 (286 aa).

The ABC transporter domain maps to 3 to 246 (IRFDNVSYTY…KEKLADWHIG (244 aa)). 40–47 (GQTGSGKS) serves as a coordination point for ATP.

This sequence belongs to the ABC transporter superfamily. Energy-coupling factor EcfA family. As to quaternary structure, forms a stable energy-coupling factor (ECF) transporter complex composed of 2 membrane-embedded substrate-binding proteins (S component), 2 ATP-binding proteins (A component) and 2 transmembrane proteins (T component).

The protein localises to the cell membrane. Its function is as follows. ATP-binding (A) component of a common energy-coupling factor (ECF) ABC-transporter complex. Unlike classic ABC transporters this ECF transporter provides the energy necessary to transport a number of different substrates. The polypeptide is Energy-coupling factor transporter ATP-binding protein EcfA2 (Staphylococcus aureus (strain MRSA252)).